A 160-amino-acid polypeptide reads, in one-letter code: Putative UPF0479 protein YBL113W-A (160 aa).

2 helical membrane passes run 39–59 and 136–156; these read IVFC…KVLQ and VPMI…ISQH.

Belongs to the UPF0479 family.

It localises to the membrane. This chain is Putative UPF0479 protein YBL113W-A, found in Saccharomyces cerevisiae (strain ATCC 204508 / S288c) (Baker's yeast).